A 321-amino-acid polypeptide reads, in one-letter code: Lipoyl synthase (321 aa).

[4Fe-4S] cluster is bound by residues Cys68, Cys73, Cys79, Cys94, Cys98, Cys101, and Ser308. One can recognise a Radical SAM core domain in the interval 80–297; that stretch reads FNHGTATFMI…KEIALELGFT (218 aa).

Belongs to the radical SAM superfamily. Lipoyl synthase family. The cofactor is [4Fe-4S] cluster.

The protein resides in the cytoplasm. It catalyses the reaction [[Fe-S] cluster scaffold protein carrying a second [4Fe-4S](2+) cluster] + N(6)-octanoyl-L-lysyl-[protein] + 2 oxidized [2Fe-2S]-[ferredoxin] + 2 S-adenosyl-L-methionine + 4 H(+) = [[Fe-S] cluster scaffold protein] + N(6)-[(R)-dihydrolipoyl]-L-lysyl-[protein] + 4 Fe(3+) + 2 hydrogen sulfide + 2 5'-deoxyadenosine + 2 L-methionine + 2 reduced [2Fe-2S]-[ferredoxin]. Its pathway is protein modification; protein lipoylation via endogenous pathway; protein N(6)-(lipoyl)lysine from octanoyl-[acyl-carrier-protein]: step 2/2. In terms of biological role, catalyzes the radical-mediated insertion of two sulfur atoms into the C-6 and C-8 positions of the octanoyl moiety bound to the lipoyl domains of lipoate-dependent enzymes, thereby converting the octanoylated domains into lipoylated derivatives. The polypeptide is Lipoyl synthase (Vibrio atlanticus (strain LGP32) (Vibrio splendidus (strain Mel32))).